A 547-amino-acid chain; its full sequence is Serine/threonine-protein kinase RIO2 (547 aa).

Residues 97-273 form the Protein kinase domain; it reads VGNQMGVGKE…RDVKCIREFF (177 aa). Residue Lys-123 coordinates ATP. Catalysis depends on Asp-228, which acts as the Proton acceptor. Phosphoserine is present on residues Ser-332, Ser-337, Ser-350, Ser-362, Ser-385, and Ser-390. The segment at 352–385 is disordered; it reads LEKEADPADESGGSWCCSSTDSKQIKDGGLPEES. The Nuclear export signal motif lies at 399-408; the sequence is AVEEMERQVL. Residues 404–445 are disordered; it reads ERQVLPHRSVTEFSEESRRTENDGQPGQRSPAGSEDCDDEPP. Phosphoserine is present on residues Ser-412, Ser-417, Ser-433, Ser-437, and Ser-543.

It belongs to the protein kinase superfamily. RIO-type Ser/Thr kinase family. In terms of assembly, associated with late 40S pre-ribosomal particles. Interacts with PLK1 (via its N-terminus). Mg(2+) serves as cofactor. Post-translationally, autophosphorylated (in vitro). Phosphorylation affects the timing of the metaphase-anaphase transition.

The protein localises to the cytoplasm. The enzyme catalyses L-seryl-[protein] + ATP = O-phospho-L-seryl-[protein] + ADP + H(+). It carries out the reaction L-threonyl-[protein] + ATP = O-phospho-L-threonyl-[protein] + ADP + H(+). In terms of biological role, serine/threonine-protein kinase involved in the final steps of cytoplasmic maturation of the 40S ribosomal subunit. Involved in export of the 40S pre-ribosome particles (pre-40S) from the nucleus to the cytoplasm. Its kinase activity is required for the release of NOB1, PNO1 and LTV1 from the late pre-40S and the processing of 18S-E pre-rRNA to the mature 18S rRNA. May regulate the timing of the metaphase-anaphase transition during mitotic progression, and its phosphorylation, may regulate this function. The chain is Serine/threonine-protein kinase RIO2 (Riok2) from Mus musculus (Mouse).